Consider the following 276-residue polypeptide: UPF0276 protein Caul_0757 (276 aa).

This sequence belongs to the UPF0276 family.

The protein is UPF0276 protein Caul_0757 of Caulobacter sp. (strain K31).